Here is a 273-residue protein sequence, read N- to C-terminus: Pantothenate synthetase (273 aa).

27–34 contributes to the ATP binding site; it reads MGALHDGH. Residue His34 is the Proton donor of the active site. Gln58 is a (R)-pantoate binding site. Residue Gln58 participates in beta-alanine binding. Residue 144–147 coordinates ATP; that stretch reads GKKD. Gln150 contacts (R)-pantoate. ATP is bound by residues Val173 and 181–184; that span reads LSSR.

It belongs to the pantothenate synthetase family. In terms of assembly, homodimer.

Its subcellular location is the cytoplasm. It catalyses the reaction (R)-pantoate + beta-alanine + ATP = (R)-pantothenate + AMP + diphosphate + H(+). The protein operates within cofactor biosynthesis; (R)-pantothenate biosynthesis; (R)-pantothenate from (R)-pantoate and beta-alanine: step 1/1. Functionally, catalyzes the condensation of pantoate with beta-alanine in an ATP-dependent reaction via a pantoyl-adenylate intermediate. The polypeptide is Pantothenate synthetase (Campylobacter curvus (strain 525.92)).